Here is a 550-residue protein sequence, read N- to C-terminus: MSVADVALSPIHRGSAFAVGGFGQSTTTHYSVKSVLVFLSVSGSTMPMLILESDSIAEVKLRIQTCNGFRVRRQKLVFSGRELARNASRVKDYGVTGGSVLHLVLKLYDPLLVTVITTCGKVFQFHVDRRRNVGYLKKRISKEGKGFPEVDDQEILFKGEKLDDNRIIDGICKDGNSVIHLLVKKSVEDTVKREEDTATGKDSLLEPVVLNPDVKLPEVLEDMIDRTVDGLNKGSPPVRSAEGTGGTYLMQDSSGLNYVSVFKPMDEEPMAVNNPQQLPVSSDGQGLKRGTRVGEGATREVAAYLLDHPKSGLRSVSKEVMGFAGVPPTAMVRSSHKVYNYPNGFSSCATKDAKVGSLQMFMKNNGSCEDIGPGAFPVEEVHKICVFDIRMANADRHAGNILTGKSEEGKTLLIPIDHGYCLPENFEDCTFEWLYWPQAKLPFSADTIDYINSLDSEQDIALLQLHGWNVPEAVSRTLRISTMLLKKGVERNLTPYQIGSVMCRETVNKDSAIEEIVREAHNSVLPASSEATFLEAVSVAMDRRLDELTK.

Ubiquitin-like domains follow at residues 34-111 (SVLV…YDPL) and 112-190 (LVTV…VEDT). The interval 228–247 (VDGLNKGSPPVRSAEGTGGT) is disordered. Residues 234 to 532 (GSPPVRSAEG…SVLPASSEAT (299 aa)) enclose the PI3K/PI4K catalytic domain. Positions 240–246 (SAEGTGG) are G-loop. ATP-binding positions include 241–247 (AEGTGGT), K263, and 359–362 (QMFM). Positions 392–400 (ANADRHAGN) are catalytic loop. The segment at 415 to 441 (PIDHGYCLPENFEDCTFEWLYWPQAKL) is activation loop. D417 contributes to the ATP binding site.

It belongs to the PI3/PI4-kinase family. Type II PI4K subfamily.

It localises to the membrane. The catalysed reaction is a 1,2-diacyl-sn-glycero-3-phospho-(1D-myo-inositol) + ATP = a 1,2-diacyl-sn-glycero-3-phospho-(1D-myo-inositol 4-phosphate) + ADP + H(+). Its function is as follows. The phosphorylation of phosphatidylinositol (PI) to PI4P is the first committed step in the generation of phosphatidylinositol 4,5-bisphosphate (PIP2), a precursor of the second messenger inositol 1,4,5-trisphosphate (InsP3). This is Phosphatidylinositol 4-kinase gamma 2 (PI4KG2) from Arabidopsis thaliana (Mouse-ear cress).